Consider the following 482-residue polypeptide: Bifunctional protein GlmU (482 aa).

The tract at residues Met-1 to Arg-238 is pyrophosphorylase. UDP-N-acetyl-alpha-D-glucosamine is bound by residues Leu-12–Gly-15, Lys-26, Gln-79, and Gly-84–Thr-85. Asp-110 is a binding site for Mg(2+). 4 residues coordinate UDP-N-acetyl-alpha-D-glucosamine: Gly-147, Glu-163, Asn-178, and Asn-236. Residue Asn-236 participates in Mg(2+) binding. Residues Leu-239–Ala-259 are linker. The tract at residues Gly-260–Ser-482 is N-acetyltransferase. Residues Arg-341 and Lys-359 each coordinate UDP-N-acetyl-alpha-D-glucosamine. His-371 acts as the Proton acceptor in catalysis. Tyr-374 and Asn-385 together coordinate UDP-N-acetyl-alpha-D-glucosamine. Residues Ala-388, Asn-394–Tyr-395, Ser-413, Ala-431, and Arg-448 each bind acetyl-CoA. The interval Val-458–Ser-482 is disordered. Residues Ser-465 to Gln-476 are compositionally biased toward low complexity.

The protein in the N-terminal section; belongs to the N-acetylglucosamine-1-phosphate uridyltransferase family. It in the C-terminal section; belongs to the transferase hexapeptide repeat family. As to quaternary structure, homotrimer. It depends on Mg(2+) as a cofactor.

It is found in the cytoplasm. It carries out the reaction alpha-D-glucosamine 1-phosphate + acetyl-CoA = N-acetyl-alpha-D-glucosamine 1-phosphate + CoA + H(+). The enzyme catalyses N-acetyl-alpha-D-glucosamine 1-phosphate + UTP + H(+) = UDP-N-acetyl-alpha-D-glucosamine + diphosphate. The protein operates within nucleotide-sugar biosynthesis; UDP-N-acetyl-alpha-D-glucosamine biosynthesis; N-acetyl-alpha-D-glucosamine 1-phosphate from alpha-D-glucosamine 6-phosphate (route II): step 2/2. It participates in nucleotide-sugar biosynthesis; UDP-N-acetyl-alpha-D-glucosamine biosynthesis; UDP-N-acetyl-alpha-D-glucosamine from N-acetyl-alpha-D-glucosamine 1-phosphate: step 1/1. It functions in the pathway bacterial outer membrane biogenesis; LPS lipid A biosynthesis. Functionally, catalyzes the last two sequential reactions in the de novo biosynthetic pathway for UDP-N-acetylglucosamine (UDP-GlcNAc). The C-terminal domain catalyzes the transfer of acetyl group from acetyl coenzyme A to glucosamine-1-phosphate (GlcN-1-P) to produce N-acetylglucosamine-1-phosphate (GlcNAc-1-P), which is converted into UDP-GlcNAc by the transfer of uridine 5-monophosphate (from uridine 5-triphosphate), a reaction catalyzed by the N-terminal domain. In Streptomyces griseus subsp. griseus (strain JCM 4626 / CBS 651.72 / NBRC 13350 / KCC S-0626 / ISP 5235), this protein is Bifunctional protein GlmU.